We begin with the raw amino-acid sequence, 118 residues long: Ribonuclease P protein component (118 aa).

Belongs to the RnpA family. Consists of a catalytic RNA component (M1 or rnpB) and a protein subunit.

It carries out the reaction Endonucleolytic cleavage of RNA, removing 5'-extranucleotides from tRNA precursor.. Functionally, RNaseP catalyzes the removal of the 5'-leader sequence from pre-tRNA to produce the mature 5'-terminus. It can also cleave other RNA substrates such as 4.5S RNA. The protein component plays an auxiliary but essential role in vivo by binding to the 5'-leader sequence and broadening the substrate specificity of the ribozyme. The sequence is that of Ribonuclease P protein component from Vibrio parahaemolyticus serotype O3:K6 (strain RIMD 2210633).